An 87-amino-acid polypeptide reads, in one-letter code: Large ribosomal subunit protein eL20 (87 aa).

It belongs to the eukaryotic ribosomal protein eL20 family. As to quaternary structure, part of the 50S ribosomal subunit. Binds 23S rRNA.

The polypeptide is Large ribosomal subunit protein eL20 (Staphylothermus marinus (strain ATCC 43588 / DSM 3639 / JCM 9404 / F1)).